We begin with the raw amino-acid sequence, 272 residues long: Imidazole glycerol phosphate synthase subunit HisF (272 aa).

Active-site residues include Asp11 and Asp130.

The protein belongs to the HisA/HisF family. Heterodimer of HisH and HisF.

Its subcellular location is the cytoplasm. The enzyme catalyses 5-[(5-phospho-1-deoxy-D-ribulos-1-ylimino)methylamino]-1-(5-phospho-beta-D-ribosyl)imidazole-4-carboxamide + L-glutamine = D-erythro-1-(imidazol-4-yl)glycerol 3-phosphate + 5-amino-1-(5-phospho-beta-D-ribosyl)imidazole-4-carboxamide + L-glutamate + H(+). It functions in the pathway amino-acid biosynthesis; L-histidine biosynthesis; L-histidine from 5-phospho-alpha-D-ribose 1-diphosphate: step 5/9. Functionally, IGPS catalyzes the conversion of PRFAR and glutamine to IGP, AICAR and glutamate. The HisF subunit catalyzes the cyclization activity that produces IGP and AICAR from PRFAR using the ammonia provided by the HisH subunit. In Methanococcus vannielii (strain ATCC 35089 / DSM 1224 / JCM 13029 / OCM 148 / SB), this protein is Imidazole glycerol phosphate synthase subunit HisF.